A 406-amino-acid chain; its full sequence is F-box/WD repeat-containing protein mec-15 (406 aa).

Residues 6-53 (PTELISLPSELLCHLFTYLPQRQLITEIPLVCRRFNTILNDDKFWSRR) enclose the F-box domain. WD repeat units follow at residues 101 to 142 (GHSA…NGED), 156 to 195 (AHSGWIWNMAQESTSTNFYTTSWDSTVKSWHITDNGALQN), 242 to 279 (LHKRAVIALAVQGDKIFTSGEDRLMMMVDRRNFSKPVL), 281 to 320 (EYSPTAYKSCLSLQCNQLLTSTSDGKVKLYDANNFNVLQT), and 365 to 406 (SHEL…DQEN).

As to quaternary structure, may interact with the SCF ubiquitin ligase complex component skr-1. As to expression, expressed in several neurons in the head, tail and ventral cord, but absent in touch receptor neurons in adults. Expressed in GABAergic and cholinergic motor neurons.

The protein resides in the perikaryon. In terms of biological role, plays a role in mechanosensory transduction (touch sensitivity), touch receptor neuron development and synapse formation. Regulates expression of the protein snb-1 and the distribution of synaptic vesicles at synapses to promote synaptic transmission at the neuromuscular junctions of GABAergic motor neurons. This Caenorhabditis elegans protein is F-box/WD repeat-containing protein mec-15.